We begin with the raw amino-acid sequence, 287 residues long: Protease HtpX (287 aa).

The next 2 membrane-spanning stretches (helical) occupy residues 4 to 24 (IMLF…VLNI) and 36 to 56 (LSGL…ISLM). His-143 provides a ligand contact to Zn(2+). Glu-144 is a catalytic residue. His-147 is a Zn(2+) binding site. The next 2 helical transmembrane spans lie at 158 to 178 (LMQG…ANIV) and 192 to 212 (MVYF…ASFI). A Zn(2+)-binding site is contributed by Glu-221.

The protein belongs to the peptidase M48B family. It depends on Zn(2+) as a cofactor.

The protein resides in the cell inner membrane. The sequence is that of Protease HtpX from Vibrio parahaemolyticus serotype O3:K6 (strain RIMD 2210633).